Reading from the N-terminus, the 196-residue chain is NAD(P)H-quinone oxidoreductase subunit I (196 aa).

2 consecutive 4Fe-4S ferredoxin-type domains span residues 54–83 (GRIHFEFDKCIACEVCVRVCPINLPVVDWV) and 94–123 (KHYSIDFGVCIFCANCVEYCPTNCLSVTEE). The [4Fe-4S] cluster site is built by Cys63, Cys66, Cys69, Cys73, Cys103, Cys106, Cys109, and Cys113. The interval 174 to 196 (PAGAQRAGERPEAIANTAKSSEN) is disordered.

It belongs to the complex I 23 kDa subunit family. In terms of assembly, NDH-1 is composed of at least 11 different subunits. It depends on [4Fe-4S] cluster as a cofactor.

The protein resides in the cellular thylakoid membrane. The catalysed reaction is a plastoquinone + NADH + (n+1) H(+)(in) = a plastoquinol + NAD(+) + n H(+)(out). It catalyses the reaction a plastoquinone + NADPH + (n+1) H(+)(in) = a plastoquinol + NADP(+) + n H(+)(out). NDH-1 shuttles electrons from an unknown electron donor, via FMN and iron-sulfur (Fe-S) centers, to quinones in the respiratory and/or the photosynthetic chain. The immediate electron acceptor for the enzyme in this species is believed to be plastoquinone. Couples the redox reaction to proton translocation, and thus conserves the redox energy in a proton gradient. In Thermosynechococcus vestitus (strain NIES-2133 / IAM M-273 / BP-1), this protein is NAD(P)H-quinone oxidoreductase subunit I.